The following is a 251-amino-acid chain: Metallo-beta-lactamase domain-containing protein 1 (251 aa).

Zn(2+) is bound by residues histidine 118, histidine 120, aspartate 122, histidine 123, histidine 173, aspartate 196, and histidine 235.

It belongs to the metallo-beta-lactamase superfamily. Glyoxalase II family. In terms of assembly, homodimer. It depends on Zn(2+) as a cofactor.

The protein localises to the cytoplasm. It is found in the cytosol. Its subcellular location is the nucleus. The catalysed reaction is a ribonucleotidyl-ribonucleotide-RNA + H2O = a 3'-end ribonucleotide-RNA + a 5'-end 5'-phospho-ribonucleoside-RNA + H(+). Functionally, endoribonuclease that catalyzes the hydrolysis of histone-coding pre-mRNA 3'-end. Involved in histone pre-mRNA processing during the S-phase of the cell cycle, which is required for entering/progressing through S-phase. Cleaves histone pre-mRNA at a major and a minor cleavage site after the 5'-ACCCA-3' and the 5'-ACCCACA-3' sequence, respectively, and located downstream of the stem-loop. May require the presence of the HDE element located at the histone pre-RNA 3'-end to avoid non-specific cleavage. The sequence is that of Metallo-beta-lactamase domain-containing protein 1 (Mblac1) from Rattus norvegicus (Rat).